The sequence spans 215 residues: SAGA complex/transcription factor TFIID complex subunit Taf10 (215 aa).

Residues 1-77 are disordered; sequence MSDINNNEPA…SRERHGSNYV (77 aa). Residues 23-42 are compositionally biased toward polar residues; it reads GNNSMSVDEQPETSSTNLPT. Basic and acidic residues predominate over residues 58–73; sequence NNEDSPKSDDSRERHG. The region spanning 58–203 is the Histone-fold domain; the sequence is NNEDSPKSDD…VDDLSAALNE (146 aa).

This sequence belongs to the TAF10 family. Component of the 1.8 MDa SAGA (Spt-Ada-Gcn5 acetyltransferase) complex, which is composed of 19 subunits tra1, spt7, taf5, ngg1/ada3, sgf73, spt20, spt8, taf12, taf6, hfi1/ada1, ubp8, gcn5, ada2, spt3, sgf29, taf10, taf9, sgf11 and sus1. The SAGA complex is composed of 4 modules, namely the HAT (histone acetyltransferase) module (gcn5, ada2, ngg1/ada3 and sgf29), the DUB (deubiquitinating) module (ubp8, sgf11, sgf73 and sus1), the core or TAF (TBP-associated factor) module (taf5, taf6, taf9, taf10 and taf12), and the Tra1 or SPT (Suppressor of Ty) module (tra1, hfi1/ada1, spt3, spt7, spt8 and spt20). The Tra1/SPT module binds activators, the core module recruits TBP (TATA-binding protein), the HAT module contains the histone H3 acetyltransferase gcn5, and the DUB module comprises the histone H2B deubiquitinase ubp8. Component of the 1.2 MDa TFIID complex, which is composed of TATA-binding protein (TBP) and the 14 TBP-associated factors (TAFs). It comprises 1 copy of each taf1, taf2, taf3, taf7, taf8, taf11, taf13, 2 copies of each taf4, taf5, taf6, taf9, taf10, taf12, and 3 copies of taf14. In TFIID, taf10 heterodimerizes with taf3 and taf8.

The protein localises to the nucleus. Functions as a component of both the DNA-binding general transcription initiation factor complex TFIID and the transcription coactivator SAGA complex. Binding of TFIID to a promoter (with or without TATA element) is the initial step in pre-initiation complex (PIC) formation. TFIID plays a key role in the regulation of gene expression by RNA polymerase II through different activities such as transcription activator interaction, core promoter recognition and selectivity, TFIIA and TFIIB interaction, chromatin modification (histone acetylation by TAF1), facilitation of DNA opening and initiation of transcription. SAGA acts as a general cofactor required for essentially all RNA polymerase II transcription. At the promoters, SAGA is required for transcription pre-initiation complex (PIC) recruitment. It influences RNA polymerase II transcriptional activity through different activities such as TBP interaction (via core/TAF module) and promoter selectivity, interaction with transcription activators (via Tra1/SPT module), and chromatin modification through histone acetylation (via HAT module) and deubiquitination (via DUB module). SAGA preferentially acetylates histones H3 (to form H3K9ac, H3K14ac, H3K18ac and H3K23ac) and H2B and deubiquitinates histone H2B. SAGA interacts with DNA via upstream activating sequences (UASs). This is SAGA complex/transcription factor TFIID complex subunit Taf10 from Schizosaccharomyces pombe (strain 972 / ATCC 24843) (Fission yeast).